The chain runs to 162 residues: 2-C-methyl-D-erythritol 2,4-cyclodiphosphate synthase (162 aa).

A divalent metal cation-binding residues include Asp12 and His14. Residues 12–14 (DVH) and 38–39 (HS) each bind 4-CDP-2-C-methyl-D-erythritol 2-phosphate. His46 contributes to the a divalent metal cation binding site. 4-CDP-2-C-methyl-D-erythritol 2-phosphate contacts are provided by residues 60–62 (DIG), 65–69 (FPDTD), and Arg146.

Belongs to the IspF family. In terms of assembly, homotrimer. A divalent metal cation serves as cofactor.

The enzyme catalyses 4-CDP-2-C-methyl-D-erythritol 2-phosphate = 2-C-methyl-D-erythritol 2,4-cyclic diphosphate + CMP. It functions in the pathway isoprenoid biosynthesis; isopentenyl diphosphate biosynthesis via DXP pathway; isopentenyl diphosphate from 1-deoxy-D-xylulose 5-phosphate: step 4/6. Involved in the biosynthesis of isopentenyl diphosphate (IPP) and dimethylallyl diphosphate (DMAPP), two major building blocks of isoprenoid compounds. Catalyzes the conversion of 4-diphosphocytidyl-2-C-methyl-D-erythritol 2-phosphate (CDP-ME2P) to 2-C-methyl-D-erythritol 2,4-cyclodiphosphate (ME-CPP) with a corresponding release of cytidine 5-monophosphate (CMP). The sequence is that of 2-C-methyl-D-erythritol 2,4-cyclodiphosphate synthase from Bordetella bronchiseptica (strain ATCC BAA-588 / NCTC 13252 / RB50) (Alcaligenes bronchisepticus).